The primary structure comprises 95 residues: Large ribosomal subunit protein bL25 (95 aa).

Belongs to the bacterial ribosomal protein bL25 family. Part of the 50S ribosomal subunit; part of the 5S rRNA/L5/L18/L25 subcomplex. Contacts the 5S rRNA. Binds to the 5S rRNA independently of L5 and L18.

Its function is as follows. This is one of the proteins that binds to the 5S RNA in the ribosome where it forms part of the central protuberance. The sequence is that of Large ribosomal subunit protein bL25 from Buchnera aphidicola subsp. Acyrthosiphon pisum (strain 5A).